Reading from the N-terminus, the 621-residue chain is KIF-binding protein (621 aa).

At Ser178 the chain carries Phosphoserine.

This sequence belongs to the KIF-binding protein family. As to quaternary structure, interacts with KIF1B; positively regulates KIF1B microtubule motor activity. Interacts with STMN2.

The protein localises to the cytoplasm. It localises to the cytoskeleton. In terms of biological role, activator of KIF1B plus-end-directed microtubule motor activity. Required for organization of axonal microtubules, and axonal outgrowth and maintenance during peripheral and central nervous system development. The sequence is that of KIF-binding protein (KIFBP) from Bos taurus (Bovine).